The chain runs to 259 residues: Ubiquinone/menaquinone biosynthesis C-methyltransferase UbiE (259 aa).

Residues Thr82, Asp103, 131–132 (NA), and Ser148 each bind S-adenosyl-L-methionine.

This sequence belongs to the class I-like SAM-binding methyltransferase superfamily. MenG/UbiE family.

It carries out the reaction a 2-demethylmenaquinol + S-adenosyl-L-methionine = a menaquinol + S-adenosyl-L-homocysteine + H(+). The enzyme catalyses a 2-methoxy-6-(all-trans-polyprenyl)benzene-1,4-diol + S-adenosyl-L-methionine = a 5-methoxy-2-methyl-3-(all-trans-polyprenyl)benzene-1,4-diol + S-adenosyl-L-homocysteine + H(+). It functions in the pathway quinol/quinone metabolism; menaquinone biosynthesis; menaquinol from 1,4-dihydroxy-2-naphthoate: step 2/2. The protein operates within cofactor biosynthesis; ubiquinone biosynthesis. Its function is as follows. Methyltransferase required for the conversion of demethylmenaquinol (DMKH2) to menaquinol (MKH2) and the conversion of 2-polyprenyl-6-methoxy-1,4-benzoquinol (DDMQH2) to 2-polyprenyl-3-methyl-6-methoxy-1,4-benzoquinol (DMQH2). The protein is Ubiquinone/menaquinone biosynthesis C-methyltransferase UbiE of Haemophilus ducreyi (strain 35000HP / ATCC 700724).